Reading from the N-terminus, the 298-residue chain is Rhodomycin D methylesterase DnrP (298 aa).

Positions 25 to 277 (PLLLIAGGNL…VEIENMGHAL (253 aa)) constitute an AB hydrolase-1 domain.

It belongs to the methyl esterase DnrP family.

The enzyme catalyses rhodomycin D + H2O = 10-carboxy-13-deoxycarminomycin + methanol + H(+). The catalysed reaction is 4-O-methylrhodomycin D + H2O = 10-carboxy-13-deoxydaunorubicin + methanol + H(+). Its pathway is antibiotic biosynthesis; daunorubicin biosynthesis. The protein operates within antibiotic biosynthesis; carminomycin biosynthesis. Involved in the biosynthesis of the anthracyclines carminomycin and daunorubicin (daunomycin) which are aromatic polyketide antibiotics that exhibit high cytotoxicity and are widely applied in the chemotherapy of a variety of cancers. Catalyzes the removal of methyl group from the carbomethoxy group of rhodomycin D (10-carbomethoxy-13-deoxycarminomycin) and 4-O-methylrhodomycin D to yield 10-carboxy-13-deoxycarminomycin and 10-carboxy-13-deoxydaunorubicin, respectively. Could be also involved in the decarboxylation of 10-carboxy-13-deoxycarminomycin and 10-carboxy-13-deoxydaunorubicin to yield 13-deoxycarminomycin and 13-deoxydaunorubicin, respectively. It seems that DnrK may influence the ability of DnrP to carry out the decarboxylation. The sequence is that of Rhodomycin D methylesterase DnrP (dnrP) from Streptomyces peucetius.